The sequence spans 83 residues: Short neurotoxin VAN-10 (83 aa).

Positions 1–21 (MKTLLLTLVVVTIVCLDLGYT) are cleaved as a signal peptide. 4 disulfides stabilise this stretch: cysteine 24/cysteine 45, cysteine 38/cysteine 62, cysteine 64/cysteine 75, and cysteine 76/cysteine 81.

The protein belongs to the three-finger toxin family. Short-chain subfamily. Type I alpha-neurotoxin sub-subfamily. In terms of tissue distribution, expressed by the venom gland.

It localises to the secreted. Functionally, binds to muscle nicotinic acetylcholine receptor (nAChR) and inhibit acetylcholine from binding to the receptor, thereby impairing neuromuscular transmission. The chain is Short neurotoxin VAN-10 from Laticauda laticaudata (Blue-ringed sea krait).